Consider the following 338-residue polypeptide: Heat-inducible transcription repressor HrcA (338 aa).

This sequence belongs to the HrcA family.

Negative regulator of class I heat shock genes (grpE-dnaK-dnaJ and groELS operons). Prevents heat-shock induction of these operons. The sequence is that of Heat-inducible transcription repressor HrcA from Bacillus cereus (strain AH820).